The primary structure comprises 598 residues: Elongation factor 4 (598 aa).

In terms of domain architecture, tr-type G spans 2-184 (TKIRNFSIIA…AVVDRIPPPS (183 aa)). GTP contacts are provided by residues 14-19 (DHGKST) and 131-134 (NKID).

Belongs to the TRAFAC class translation factor GTPase superfamily. Classic translation factor GTPase family. LepA subfamily.

It is found in the cell inner membrane. The catalysed reaction is GTP + H2O = GDP + phosphate + H(+). Required for accurate and efficient protein synthesis under certain stress conditions. May act as a fidelity factor of the translation reaction, by catalyzing a one-codon backward translocation of tRNAs on improperly translocated ribosomes. Back-translocation proceeds from a post-translocation (POST) complex to a pre-translocation (PRE) complex, thus giving elongation factor G a second chance to translocate the tRNAs correctly. Binds to ribosomes in a GTP-dependent manner. The polypeptide is Elongation factor 4 (Syntrophobacter fumaroxidans (strain DSM 10017 / MPOB)).